Here is a 390-residue protein sequence, read N- to C-terminus: 3-ketoacyl-CoA thiolase (390 aa).

Cys95 serves as the catalytic Acyl-thioester intermediate. Catalysis depends on proton acceptor residues His346 and Cys376.

It belongs to the thiolase-like superfamily. Thiolase family. Heterotetramer of two alpha chains (FadB) and two beta chains (FadA).

It localises to the cytoplasm. The enzyme catalyses an acyl-CoA + acetyl-CoA = a 3-oxoacyl-CoA + CoA. It participates in lipid metabolism; fatty acid beta-oxidation. Catalyzes the final step of fatty acid oxidation in which acetyl-CoA is released and the CoA ester of a fatty acid two carbons shorter is formed. The protein is 3-ketoacyl-CoA thiolase of Psychrobacter arcticus (strain DSM 17307 / VKM B-2377 / 273-4).